The following is a 140-amino-acid chain: Transcription antitermination protein NusB (140 aa).

This sequence belongs to the NusB family.

Involved in transcription antitermination. Required for transcription of ribosomal RNA (rRNA) genes. Binds specifically to the boxA antiterminator sequence of the ribosomal RNA (rrn) operons. The sequence is that of Transcription antitermination protein NusB from Streptococcus pneumoniae serotype 2 (strain D39 / NCTC 7466).